A 95-amino-acid chain; its full sequence is Small ribosomal subunit protein bS6 (95 aa).

Belongs to the bacterial ribosomal protein bS6 family.

Its function is as follows. Binds together with bS18 to 16S ribosomal RNA. The chain is Small ribosomal subunit protein bS6 from Geobacillus kaustophilus (strain HTA426).